A 268-amino-acid chain; its full sequence is Methionine aminopeptidase (268 aa).

Residue histidine 79 coordinates substrate. The a divalent metal cation site is built by aspartate 97, aspartate 108, and histidine 172. Histidine 179 contacts substrate. The a divalent metal cation site is built by glutamate 205 and glutamate 236.

Belongs to the peptidase M24A family. Methionine aminopeptidase type 1 subfamily. As to quaternary structure, monomer. Requires Co(2+) as cofactor. Zn(2+) is required as a cofactor. Mn(2+) serves as cofactor. The cofactor is Fe(2+).

The catalysed reaction is Release of N-terminal amino acids, preferentially methionine, from peptides and arylamides.. In terms of biological role, removes the N-terminal methionine from nascent proteins. The N-terminal methionine is often cleaved when the second residue in the primary sequence is small and uncharged (Met-Ala-, Cys, Gly, Pro, Ser, Thr, or Val). Requires deformylation of the N(alpha)-formylated initiator methionine before it can be hydrolyzed. This Haemophilus influenzae (strain ATCC 51907 / DSM 11121 / KW20 / Rd) protein is Methionine aminopeptidase.